A 331-amino-acid chain; its full sequence is UDP-GalNAc:beta-1,3-N-acetylgalactosaminyltransferase 1 (331 aa).

Topologically, residues 1 to 20 are cytoplasmic; that stretch reads MASALWTVLPSRMSLRSLQW. A helical; Signal-anchor for type II membrane protein transmembrane segment spans residues 21 to 43; it reads SLLLLSLLSFLVMWYLSLPHYNV. Residues 44-331 lie on the Lumenal side of the membrane; it reads IERVNWMYFY…VMLRNTTCHY (288 aa). N-linked (GlcNAc...) asparagine glycosylation is found at Asn72, Asn154, Asn198, Asn212, and Asn326.

The protein belongs to the glycosyltransferase 31 family. Mg(2+) is required as a cofactor.

It localises to the golgi apparatus membrane. The catalysed reaction is a globoside Gb3Cer (d18:1(4E)) + UDP-N-acetyl-alpha-D-galactosamine = a globoside Gb4Cer (d18:1(4E)) + UDP + H(+). Its pathway is protein modification; protein glycosylation. Its function is as follows. Transfers N-acetylgalactosamine onto globotriaosylceramide. Plays a critical role in preimplantation stage embryonic development. The polypeptide is UDP-GalNAc:beta-1,3-N-acetylgalactosaminyltransferase 1 (B3GALNT1) (Pongo abelii (Sumatran orangutan)).